A 249-amino-acid chain; its full sequence is Vesicle-associated membrane protein-associated protein A (249 aa).

N-acetylalanine is present on Ala2. At Ala2–Pro227 the chain is on the cytoplasmic side. The MSP domain occupies Ile14–Glu131. Positions Lys50–Thr53 are phosphorylated FFAT motif binding. At Lys125 the chain carries N6-acetyllysine. At Ser166 the chain carries Phosphoserine. Residues Asp169–Lys205 are a coiled coil. Position 170 is a phosphothreonine (Thr170). Residues Ser214, Ser216, and Ser219 each carry the phosphoserine modification. A helical; Anchor for type IV membrane protein membrane pass occupies residues Leu228–Ile248.

This sequence belongs to the VAMP-associated protein (VAP) (TC 9.B.17) family. As to quaternary structure, homodimer; disulfide-linked. Heterodimer with VAPB. Interacts with VAMP1, VAMP2, STX1A, BET1, SEC22C and with the C-terminal domain of OCLN. Interacts (via MSP domain) with OSBPL1A (via FFAT motif). Interacts (via MSP domain) with ZFYVE27; may retain ZFYVE27 in the endoplasmic reticulum and regulate its function in cell projections formation. Interacts with OSBP. Interacts (via C-terminus) with RSAD2/viperin (via C-terminus). Interacts with IFITM3. Interacts with OSBPL3 (phosphorylated form). Interacts with KIF5A in a ZFYVE27-dependent manner. Interacts (via MSP domain) with STARD3 (via phosphorylated FFAT motif); this interaction recruits VAPA to the endosome. Interacts with STARD3NL (via FFAT motif). Interacts with CERT1. Interacts with PLEKHA3 and SACM1L to form a ternary complex. Interacts with VPS13A (via FFAT motif). Interacts with RB1CC1 (via phosphorylated FFAT motif), MIGA2 (via phosphorylated FFAT motif), RMDN3 (via phosphorylated FFAT motif), KCNB1 (via phosphorylated FFAT motif) and KCNB2 (via phosphorylated FFAT motif). Interacts (via MSP domain) with WDR44 (via FFAT-like motif); the interactions connect the endoplasmic reticulum (ER) with the endosomal tubule.

Its subcellular location is the endoplasmic reticulum membrane. It localises to the cell junction. The protein resides in the tight junction. It is found in the cell membrane. Functionally, endoplasmic reticulum (ER)-anchored protein that mediates the formation of contact sites between the ER and endosomes via interaction with FFAT motif-containing proteins such as STARD3 or WDR44. STARD3-VAPA interaction enables cholesterol transfer from the ER to endosomes. Via interaction with WDR44 participates in neosynthesized protein export. In addition, recruited to the plasma membrane through OSBPL3 binding. The OSBPL3-VAPA complex stimulates RRAS signaling which in turn attenuates integrin beta-1 (ITGB1) activation at the cell surface. With OSBPL3, may regulate ER morphology. May play a role in vesicle trafficking. The chain is Vesicle-associated membrane protein-associated protein A from Bos taurus (Bovine).